Consider the following 412-residue polypeptide: Serine hydroxymethyltransferase (412 aa).

(6S)-5,6,7,8-tetrahydrofolate-binding positions include Leu-117 and 121 to 123 (GHL). Residue Lys-226 is modified to N6-(pyridoxal phosphate)lysine. (6S)-5,6,7,8-tetrahydrofolate is bound at residue 349–351 (SPF).

Belongs to the SHMT family. As to quaternary structure, homodimer. Pyridoxal 5'-phosphate is required as a cofactor.

It is found in the cytoplasm. It carries out the reaction (6R)-5,10-methylene-5,6,7,8-tetrahydrofolate + glycine + H2O = (6S)-5,6,7,8-tetrahydrofolate + L-serine. Its pathway is one-carbon metabolism; tetrahydrofolate interconversion. It functions in the pathway amino-acid biosynthesis; glycine biosynthesis; glycine from L-serine: step 1/1. Catalyzes the reversible interconversion of serine and glycine with tetrahydrofolate (THF) serving as the one-carbon carrier. This reaction serves as the major source of one-carbon groups required for the biosynthesis of purines, thymidylate, methionine, and other important biomolecules. Also exhibits THF-independent aldolase activity toward beta-hydroxyamino acids, producing glycine and aldehydes, via a retro-aldol mechanism. This Oleidesulfovibrio alaskensis (strain ATCC BAA-1058 / DSM 17464 / G20) (Desulfovibrio alaskensis) protein is Serine hydroxymethyltransferase.